Reading from the N-terminus, the 158-residue chain is SsrA-binding protein (158 aa).

A compositionally biased stretch (basic and acidic residues) spans 136–151 (KRADSKSRDWARDKQR). The segment at 136–158 (KRADSKSRDWARDKQRIMKHSTR) is disordered.

This sequence belongs to the SmpB family.

The protein localises to the cytoplasm. In terms of biological role, required for rescue of stalled ribosomes mediated by trans-translation. Binds to transfer-messenger RNA (tmRNA), required for stable association of tmRNA with ribosomes. tmRNA and SmpB together mimic tRNA shape, replacing the anticodon stem-loop with SmpB. tmRNA is encoded by the ssrA gene; the 2 termini fold to resemble tRNA(Ala) and it encodes a 'tag peptide', a short internal open reading frame. During trans-translation Ala-aminoacylated tmRNA acts like a tRNA, entering the A-site of stalled ribosomes, displacing the stalled mRNA. The ribosome then switches to translate the ORF on the tmRNA; the nascent peptide is terminated with the 'tag peptide' encoded by the tmRNA and targeted for degradation. The ribosome is freed to recommence translation, which seems to be the essential function of trans-translation. This Photobacterium profundum (strain SS9) protein is SsrA-binding protein.